Reading from the N-terminus, the 312-residue chain is MEAAARRRQHPGAAGGAGAQPGASFLQARHSSGKADEAVGTAPFHLDLWFYFTLQNWVLDFGRPIAMLVFPLEWFPLNKPSVGDYFHMAYNIITPFLLLKLIERSPRTLPRSVIYVSIITFVMGASIHLVGDSVNHRLLFSGYQHHLSVRENPIIKNLSPETLIDSFELLYYYDEYLGHCMWYVPFFLILFIYFSGCFTPTKAESSMPGAALLLAMPSGLYYWYLVTEGQIFILFIFTFFAMLALVLHQKRKRLFLDSNGLFLFYSFALTLLLVALWVAWLWNDPVLRKKYPGVIYVPEPWAFYTLHVSSRP.

The span at 1–10 (MEAAARRRQH) shows a compositional bias: basic residues. The disordered stretch occupies residues 1 to 22 (MEAAARRRQHPGAAGGAGAQPG). 7 helical membrane passes run 57–77 (WVLD…WFPL), 82–102 (VGDY…LKLI), 112–132 (SVIY…LVGD), 178–198 (GHCM…SGCF), 205–225 (SSMP…YWYL), 226–246 (VTEG…LALV), and 261–281 (LFLF…VAWL).

In terms of assembly, interacts with CRMP2. Interacts with CLN5. Interacts with CLN5. Interacts with CLN3.

It localises to the endoplasmic reticulum membrane. It is found in the endoplasmic reticulum. The protein is Ceroid-lipofuscinosis neuronal protein 6 homolog (CLN6) of Canis lupus familiaris (Dog).